A 545-amino-acid chain; its full sequence is Glucose-6-phosphate isomerase (545 aa).

Glutamate 351 serves as the catalytic Proton donor. Active-site residues include histidine 382 and lysine 510.

Belongs to the GPI family.

The protein localises to the cytoplasm. It catalyses the reaction alpha-D-glucose 6-phosphate = beta-D-fructose 6-phosphate. The protein operates within carbohydrate biosynthesis; gluconeogenesis. It functions in the pathway carbohydrate degradation; glycolysis; D-glyceraldehyde 3-phosphate and glycerone phosphate from D-glucose: step 2/4. Catalyzes the reversible isomerization of glucose-6-phosphate to fructose-6-phosphate. The sequence is that of Glucose-6-phosphate isomerase from Shewanella sp. (strain ANA-3).